The sequence spans 635 residues: 4-hydroxy-3-methylbut-2-enyl diphosphate reductase (635 aa).

Positions 1 to 279 (MSIILAKKSG…KEAIFKMSNK (279 aa)) are 4-hydroxy-3-methylbut-2-enyl diphosphate reductase. [4Fe-4S] cluster is bound at residue Cys12. The (2E)-4-hydroxy-3-methylbut-2-enyl diphosphate site is built by His42 and His77. His42 and His77 together coordinate dimethylallyl diphosphate. Isopentenyl diphosphate-binding residues include His42 and His77. [4Fe-4S] cluster is bound at residue Cys99. His127 is a (2E)-4-hydroxy-3-methylbut-2-enyl diphosphate binding site. His127 serves as a coordination point for dimethylallyl diphosphate. His127 contacts isopentenyl diphosphate. Glu129 (proton donor) is an active-site residue. Residue Thr163 participates in (2E)-4-hydroxy-3-methylbut-2-enyl diphosphate binding. [4Fe-4S] cluster is bound at residue Cys191. (2E)-4-hydroxy-3-methylbut-2-enyl diphosphate is bound by residues Ser219, Ser220, Asn221, and Ser263. Dimethylallyl diphosphate-binding residues include Ser219, Ser220, Asn221, and Ser263. Isopentenyl diphosphate is bound by residues Ser219, Ser220, Asn221, and Ser263. S1 motif domains are found at residues 298–373 (GQEV…LNRE), 380–455 (KEAF…ASRR), 476–544 (DTIK…LSIK), and 561–630 (GNIV…LSIK).

In the N-terminal section; belongs to the IspH family. Requires [4Fe-4S] cluster as cofactor.

It catalyses the reaction isopentenyl diphosphate + 2 oxidized [2Fe-2S]-[ferredoxin] + H2O = (2E)-4-hydroxy-3-methylbut-2-enyl diphosphate + 2 reduced [2Fe-2S]-[ferredoxin] + 2 H(+). The catalysed reaction is dimethylallyl diphosphate + 2 oxidized [2Fe-2S]-[ferredoxin] + H2O = (2E)-4-hydroxy-3-methylbut-2-enyl diphosphate + 2 reduced [2Fe-2S]-[ferredoxin] + 2 H(+). It participates in isoprenoid biosynthesis; dimethylallyl diphosphate biosynthesis; dimethylallyl diphosphate from (2E)-4-hydroxy-3-methylbutenyl diphosphate: step 1/1. It functions in the pathway isoprenoid biosynthesis; isopentenyl diphosphate biosynthesis via DXP pathway; isopentenyl diphosphate from 1-deoxy-D-xylulose 5-phosphate: step 6/6. Functionally, catalyzes the conversion of 1-hydroxy-2-methyl-2-(E)-butenyl 4-diphosphate (HMBPP) into a mixture of isopentenyl diphosphate (IPP) and dimethylallyl diphosphate (DMAPP). Acts in the terminal step of the DOXP/MEP pathway for isoprenoid precursor biosynthesis. The sequence is that of 4-hydroxy-3-methylbut-2-enyl diphosphate reductase from Clostridium tetani (strain Massachusetts / E88).